The sequence spans 436 residues: ATP-dependent protease ATPase subunit HslU (436 aa).

Residues Ile-19, 61-66 (GVGKTE), Asp-249, Glu-314, and Arg-386 each bind ATP.

The protein belongs to the ClpX chaperone family. HslU subfamily. In terms of assembly, a double ring-shaped homohexamer of HslV is capped on each side by a ring-shaped HslU homohexamer. The assembly of the HslU/HslV complex is dependent on binding of ATP.

The protein resides in the cytoplasm. In terms of biological role, ATPase subunit of a proteasome-like degradation complex; this subunit has chaperone activity. The binding of ATP and its subsequent hydrolysis by HslU are essential for unfolding of protein substrates subsequently hydrolyzed by HslV. HslU recognizes the N-terminal part of its protein substrates and unfolds these before they are guided to HslV for hydrolysis. The polypeptide is ATP-dependent protease ATPase subunit HslU (Bartonella bacilliformis (strain ATCC 35685 / KC583 / Herrer 020/F12,63)).